The chain runs to 188 residues: GTPase KRas (188 aa).

The residue at position 1 (methionine 1) is an N-acetylmethionine. The residue at position 2 (threonine 2) is an N-acetylthreonine; in GTPase KRas, N-terminally processed. GTP-binding positions include 10-18, 29-35, and 59-60; these read GAGGVGKSA, VDEYDPT, and AG. An Effector region motif is present at residues 32–40; sequence YDPTIEDSY. At lysine 104 the chain carries N6-acetyllysine. 116–119 lines the GTP pocket; the sequence is NKCD. A hypervariable region region spans residues 166-185; the sequence is HKEKMSKDGKKKKKKSKTKC. Residues 167–188 form a disordered region; it reads KEKMSKDGKKKKKKSKTKCIIM. Residue cysteine 185 is modified to Cysteine methyl ester. A lipid anchor (S-farnesyl cysteine) is attached at cysteine 185. A propeptide spans 186 to 188 (removed in mature form); sequence IIM.

The protein belongs to the small GTPase superfamily. Ras family. In terms of assembly, interacts with PHLPP. Interacts (active GTP-bound form preferentially) with RGS14. Interacts (when farnesylated) with PDE6D; this promotes dissociation from the cell membrane. Interacts with SOS1. Interacts (when farnesylated) with GPR31. Interacts with RAP1GDS1. Interacts (active GTP-bound form) with both SHOC2 and PP1c (all isoforms) to form a tertiary complex; SHOC2 and PP1c preferably bind M-Ras/MRAS, but they also bind K-Ras/KRAS, N-Ras/NRAS and H-Ras/HRAS. Interacts (GTP-bound form) with MAPKAP1/SIN1; inhibiting K-Ras/KRAS activity. In terms of processing, acetylation at Lys-104 prevents interaction with guanine nucleotide exchange factors (GEFs).

Its subcellular location is the cell membrane. The protein localises to the cytoplasm. It localises to the cytosol. The enzyme catalyses GTP + H2O = GDP + phosphate + H(+). Its activity is regulated as follows. Alternates between an inactive form bound to GDP and an active form bound to GTP. Activated by a guanine nucleotide-exchange factor (GEF) and inactivated by a GTPase-activating protein (GAP). Interaction with SOS1 promotes exchange of bound GDP to GTP. Ras proteins bind GDP/GTP and possess intrinsic GTPase activity. Plays an important role in the regulation of cell proliferation. Plays a role in promoting oncogenic events by inducing transcriptional silencing of tumor suppressor genes (TSGs) in colorectal cancer (CRC) cells in a ZNF304-dependent manner. This is GTPase KRas (KRAS) from Monodelphis domestica (Gray short-tailed opossum).